A 262-amino-acid chain; its full sequence is Tryptophan synthase alpha chain (262 aa).

Active-site proton acceptor residues include Glu-49 and Asp-60.

Belongs to the TrpA family. In terms of assembly, tetramer of two alpha and two beta chains.

The catalysed reaction is (1S,2R)-1-C-(indol-3-yl)glycerol 3-phosphate + L-serine = D-glyceraldehyde 3-phosphate + L-tryptophan + H2O. Its pathway is amino-acid biosynthesis; L-tryptophan biosynthesis; L-tryptophan from chorismate: step 5/5. Functionally, the alpha subunit is responsible for the aldol cleavage of indoleglycerol phosphate to indole and glyceraldehyde 3-phosphate. The polypeptide is Tryptophan synthase alpha chain (Caldanaerobacter subterraneus subsp. tengcongensis (strain DSM 15242 / JCM 11007 / NBRC 100824 / MB4) (Thermoanaerobacter tengcongensis)).